The primary structure comprises 410 residues: Histone-lysine N-methyltransferase SUV39H2 (410 aa).

Positions 47-105 constitute a Chromo domain; the sequence is YEVEYLCDYKVVKDMEYYLVKWKGWPDSTNTWEPLQNLKCPLLLQQFSNDKHNYLSQVK. Positions 189 to 247 constitute a Pre-SET domain; that stretch reads FGCSCTDCFFQKCCPAEAGVLLAYNKNQQIKIPPGTPIYECNSRCQCGPDCPNRIVQKG. Residues Cys-191, Cys-193, Cys-196, Cys-201, Cys-202, Cys-229, Cys-233, Cys-235, and Cys-239 each contribute to the Zn(2+) site. The SET domain maps to 250-373; sequence YSLCIFRTSN…AGEELTFDYQ (124 aa). S-adenosyl-L-methionine-binding positions include 261–263 and 330–331; these read RGW and NH. Cys-333 contributes to the Zn(2+) binding site. Tyr-372 serves as a coordination point for S-adenosyl-L-methionine. Phosphoserine is present on residues Ser-381, Ser-384, and Ser-388. The Post-SET domain occupies 394–410; that stretch reads VRTVCKCGAVTCRGYLN. Cys-398 lines the Zn(2+) pocket. Lys-399 contributes to the S-adenosyl-L-methionine binding site. Residues Cys-400 and Cys-405 each coordinate Zn(2+).

This sequence belongs to the class V-like SAM-binding methyltransferase superfamily. Histone-lysine methyltransferase family. Suvar3-9 subfamily. As to quaternary structure, interacts with SMAD5. The large PER complex involved in the histone methylation is composed of at least PER2, CBX3, TRIM28, SUV39H1 and/or SUV39H2; CBX3 mediates the formation of the complex. In terms of processing, ubiquitinated by the DCX(DCAF13) E3 ubiquitin ligase complex, leading to its degradation.

It is found in the nucleus. The protein resides in the chromosome. The protein localises to the centromere. The enzyme catalyses L-lysyl(9)-[histone H3] + 3 S-adenosyl-L-methionine = N(6),N(6),N(6)-trimethyl-L-lysyl(9)-[histone H3] + 3 S-adenosyl-L-homocysteine + 3 H(+). Its function is as follows. Histone methyltransferase that specifically trimethylates 'Lys-9' of histone H3 using monomethylated H3 'Lys-9' as substrate. H3 'Lys-9' trimethylation represents a specific tag for epigenetic transcriptional repression by recruiting HP1 (CBX1, CBX3 and/or CBX5) proteins to methylated histones. Mainly functions in heterochromatin regions, thereby playing a central role in the establishment of constitutive heterochromatin at pericentric and telomere regions. H3 'Lys-9' trimethylation is also required to direct DNA methylation at pericentric repeats. SUV39H1 is targeted to histone H3 via its interaction with RB1 and is involved in many processes, such as cell cycle regulation, transcriptional repression and regulation of telomere length. May participate in regulation of higher-order chromatin organization during spermatogenesis. Recruited by the large PER complex to the E-box elements of the circadian target genes such as PER2 itself or PER1, contributes to the conversion of local chromatin to a heterochromatin-like repressive state through H3 'Lys-9' trimethylation. The polypeptide is Histone-lysine N-methyltransferase SUV39H2 (SUV39H2) (Homo sapiens (Human)).